Consider the following 554-residue polypeptide: Hydroxylamine reductase (554 aa).

Positions 3, 6, 18, and 25 each coordinate [2Fe-2S] cluster. Residues His-252, Glu-276, Cys-320, Cys-408, Cys-436, Cys-461, Glu-495, and Lys-497 each coordinate hybrid [4Fe-2O-2S] cluster. A Cysteine persulfide modification is found at Cys-408.

The protein belongs to the HCP family. [2Fe-2S] cluster is required as a cofactor. It depends on hybrid [4Fe-2O-2S] cluster as a cofactor.

It is found in the cytoplasm. It catalyses the reaction A + NH4(+) + H2O = hydroxylamine + AH2 + H(+). Catalyzes the reduction of hydroxylamine to form NH(3) and H(2)O. The protein is Hydroxylamine reductase of Shewanella baltica (strain OS195).